The primary structure comprises 461 residues: ATP synthase subunit beta (461 aa).

ATP is bound at residue 151-158; that stretch reads GGAGVGKT.

This sequence belongs to the ATPase alpha/beta chains family. In terms of assembly, F-type ATPases have 2 components, CF(1) - the catalytic core - and CF(0) - the membrane proton channel. CF(1) has five subunits: alpha(3), beta(3), gamma(1), delta(1), epsilon(1). CF(0) has three main subunits: a(1), b(2) and c(9-12). The alpha and beta chains form an alternating ring which encloses part of the gamma chain. CF(1) is attached to CF(0) by a central stalk formed by the gamma and epsilon chains, while a peripheral stalk is formed by the delta and b chains.

The protein resides in the cell inner membrane. The catalysed reaction is ATP + H2O + 4 H(+)(in) = ADP + phosphate + 5 H(+)(out). Produces ATP from ADP in the presence of a proton gradient across the membrane. The catalytic sites are hosted primarily by the beta subunits. The sequence is that of ATP synthase subunit beta from Alteromonas mediterranea (strain DSM 17117 / CIP 110805 / LMG 28347 / Deep ecotype).